Here is a 368-residue protein sequence, read N- to C-terminus: Biglycan (368 aa).

Residues 1–16 (MWPLWRLVSLLALSQA) form the signal peptide. The propeptide occupies 17-37 (LPFEQRGFWDFTLDDGPFMMN). Serine 42 and serine 47 each carry an O-linked (Xyl...) (glycosaminoglycan) serine glycan. Disulfide bonds link cysteine 63–cysteine 69 and cysteine 67–cysteine 76. LRR repeat units lie at residues 82 to 102 (KSVPKEISPDTTLLDLQNNDI), 103 to 126 (SELRKDDFKGLQHLYALVLVNNKI), 127 to 150 (SKIHEKAFSPLRKLQKLYISKNHL), 151 to 171 (VEIPPNLPSSLVELRIHDNRI), 172 to 195 (RKVPKGVFSGLRNMNCIEMGGNPL), 196 to 220 (ENSGFEPGAFDGLKLNYLRISEAKL), 221 to 241 (TGIPKDLPETLNELHLDHNKI), 242 to 265 (QAIELEDLLRYSKLYRLGLGHNQI), 266 to 289 (RMIENGSLSFLPTLRELHLDNNKL), 290 to 312 (ARVPSGLPDLKLLQVVYLHSNNI), 313 to 342 (TKVGVNDFCPMGFGVKRAYYNGISLFNNPV), and 343 to 368 (PYWEVQPATFRCVTDRLAIQFGNYKK). O-linked (Xyl...) (glycosaminoglycan) serine glycans are attached at residues serine 180 and serine 198. N-linked (GlcNAc...) asparagine glycosylation is found at asparagine 270 and asparagine 311. A disulfide bond links cysteine 321 and cysteine 354.

This sequence belongs to the small leucine-rich proteoglycan (SLRP) family. SLRP class I subfamily. In terms of assembly, homodimer. Forms a ternary complex with MFAP2 and ELN. In terms of processing, the two attached glycosaminoglycan chains can be either chondroitin sulfate or dermatan sulfate. Detected in placenta (at protein level). Found in several connective tissues, especially in articular cartilages.

It is found in the secreted. The protein localises to the extracellular space. It localises to the extracellular matrix. Its function is as follows. May be involved in collagen fiber assembly. This chain is Biglycan (BGN), found in Homo sapiens (Human).